The primary structure comprises 827 residues: MMEGLKKRTRKAFGIRKKEKDTDSTGSPDRDGMQPSPHELPYHSKAECAREGGNKASKKSNGAPNGFYAEIDWERYNSPELDEEGYSIRPEEPGSTKGKHFYSSSESEEEEESHKKFNIKIKPLQSKDILKNAATVDELKASIGNIALSPSPVRKSPRRSPGAIKRNLSSEEVARPRRSTPTPELTSKKPLDDTLALAPLFGPPLESAFDGHKTEVLLDQPEIWGSGQPVNPSMESPKLARPFPTGTPPPLPPKTVPATPPRTGSPLTVATGNDQAATEAKIEKLPSISDLDSIFGPVLSPKSVAVNTEETWVHFSDASPEHVTPELTPREKVVTPPAASDIPADSPTPGPPGPPGSAGPPGPPGPRNVPSPLNLEEVQKKVAEQTFIKDDYLETLSSPKECGLGQRATPPPPPPPTYRTVVSSPGPGSGSGTGTASGASSPARPATPLVPCSCSTPPPPPPRPPSRPKLPPGKPGVGDVSRPFSPPIHSSSPPPIAPLARAESTSSISSTNSLSAATTPTVENEQXSLVWFDRGKFYLTFEGSSRGPSPLTMGAQDTLPVAAAFTETVNAYFKGADPSKCIVKITGEMVLSFPAGITRHFANNPSPAALTFRVINSSRLEHVLPNPQLLCCDNTQNDANTKEFWVNMPNLMTHLKKVSEQKPQATYYNVDMLKYQVSAQGIQSTPLNLAVNWRCEPSSTDLRIDYKYNTDAMSTAVALNNVQFLVPIDGGVTKLQAVLPPAVWNAEQQRILWKIPDISQKSENGGVGSLLARFQLAEGPSKPSPLVVQFTSEGSTLSGCDIELVGAGYGFSLIKKRFAAGKYLADN.

Disordered regions lie at residues 1-116 (MMEG…SHKK), 143-199 (IGNI…ALAP), and 223-278 (IWGS…QAAT). Composition is skewed to basic and acidic residues over residues 16–32 (RKKEKDTDSTGSPDRDG) and 40–53 (LPYHSKAECAREGG). Residues Ser-78, Ser-104, Ser-105, Ser-107, Ser-149, Ser-151, Ser-156, and Ser-169 each carry the phosphoserine modification. Phosphothreonine is present on residues Thr-180 and Thr-182. Residue Ser-236 is modified to Phosphoserine. Positions 245 to 260 (TGTPPPLPPKTVPATP) are enriched in pro residues. A phosphothreonine mark is found at Thr-247 and Thr-259. Phosphoserine occurs at positions 265, 287, 289, 300, 316, and 319. Residues 265 to 276 (SPLTVATGNDQA) show a composition bias toward polar residues. Residues 315-505 (FSDASPEHVT…IAPLARAEST (191 aa)) form a disordered region. Positions 319–333 (SPEHVTPELTPREKV) are enriched in basic and acidic residues. 3 positions are modified to phosphothreonine: Thr-324, Thr-328, and Thr-335. Residues 335–345 (TPPAASDIPAD) are compositionally biased toward low complexity. Positions 346–369 (SPTPGPPGPPGSAGPPGPPGPRNV) are enriched in pro residues. Phosphoserine is present on Ser-371. Basic and acidic residues predominate over residues 377–392 (EVQKKVAEQTFIKDDY). Ser-398 is modified (phosphoserine). Thr-409 carries the phosphothreonine modification. Residues 436–455 (ASGASSPARPATPLVPCSCS) show a composition bias toward low complexity. Positions 456-474 (TPPPPPPRPPSRPKLPPGK) are enriched in pro residues. A compositionally biased stretch (low complexity) spans 481-491 (SRPFSPPIHSS). Ser-485 bears the Phosphoserine mark. The region spanning 558–826 (TLPVAAAFTE…RFAAGKYLAD (269 aa)) is the MHD domain. Interaction with DPF motifs-containing proteins regions lie at residues 560–566 (PVAAAFT), 592–594 (SFP), 666–669 (TYYN), and 812–817 (SLIKKR). The necessary and sufficient to mediate interaction with CANX stretch occupies residues 648 to 827 (MPNLMTHLKK…FAAGKYLADN (180 aa)).

Interacts with proteins essential or regulating the formation of functional clathrin-coated pits. Interacts with CANX. Interacts with AP2A1. Interacts with EPS15. Interacts with SH3GL3. Interacts with AMPH. Interacts with ITSN1 (via SH3 domains). Interacts with and REPS1. In terms of tissue distribution, specifically expressed in brain. Also detected at lower levels in spleen and adipose tissue.

The protein localises to the membrane. Its subcellular location is the clathrin-coated pit. May function in clathrin-mediated endocytosis. Has both a membrane binding/tubulating activity and the ability to recruit proteins essential to the formation of functional clathrin-coated pits. Has a preference for membranes enriched in phosphatidylserine and phosphoinositides and is required for the endocytosis of the transferrin receptor. May also bind tubulin. May play a role in the regulation of energy homeostasis. This Psammomys obesus (Fat sand rat) protein is SH3-containing GRB2-like protein 3-interacting protein 1 (SGIP1).